A 95-amino-acid chain; its full sequence is Stationary phase-expressed protein 1 (95 aa).

Residues 20-38 form a helical membrane-spanning segment; sequence FRYIMLGLVGAAVVPTAYM.

It is found in the mitochondrion membrane. This is Stationary phase-expressed protein 1 (SPG1) from Saccharomyces cerevisiae (strain RM11-1a) (Baker's yeast).